The primary structure comprises 122 residues: Large ribosomal subunit protein uL14 (122 aa).

The protein belongs to the universal ribosomal protein uL14 family. As to quaternary structure, part of the 50S ribosomal subunit. Forms a cluster with proteins L3 and L19. In the 70S ribosome, L14 and L19 interact and together make contacts with the 16S rRNA in bridges B5 and B8.

Its function is as follows. Binds to 23S rRNA. Forms part of two intersubunit bridges in the 70S ribosome. The chain is Large ribosomal subunit protein uL14 from Geobacillus kaustophilus (strain HTA426).